The sequence spans 381 residues: MLLERLHKRLHAGSSRRSQENKDKNCKPEDALPIQPEAQHQTQDPQPLLNCDYDDMIAFDRNLSTPVFTPVMTPINNSSSNQAKSSDASYFPPYLNANRTRQNSASSLASSVSDFAQNFKQHTFYNNNAQFTSFTPQFVGLLLEVYQNTCSDPTITPFDTTNPPSGILNRVAKAAIQQSELQQLDIGCDRNSWLLTLVRQRLLQEVRKDGYLSRNTSLTSLPPPPPPQFSEMLRVPSPFVNADITDPIPLSNTNSNPNVSSTTSLTNTLNWYSLQRSNVSMKNRNGSSQYISELQPQPILARTNSNNSVSNSNAFSLLTPTPTTDSAFNFNIALLSRQRSNIISSPLASTRLPTANVSTEESSILPNESLKLKRDLLRLKR.

The segment covering 1-11 (MLLERLHKRLH) has biased composition (basic residues). The interval 1 to 30 (MLLERLHKRLHAGSSRRSQENKDKNCKPED) is disordered. The segment covering 17-30 (RSQENKDKNCKPED) has biased composition (basic and acidic residues). 3 positions are modified to phosphothreonine: Thr65, Thr69, and Thr73.

As to quaternary structure, interact with the CDC28/CLN2 complex. Post-translationally, phosphorylated during S phase in a CDC28-dependent manner. Phosphorylated at Thr-65 and Thr-73 by HOG1 under osmotic stress. The phosphorylations of Thr-65 and Thr-73 are necessary for CIP1-induced growth inhibition.

The protein localises to the cytoplasm. The protein resides in the nucleus. Acts as an inhibitor of the CDC28/CLN2 cyclin-dependent kinase complex. Stabilizes the CDC28 inhibitor SIC1. Negatively regulates the G1/S phase transition. Contributes to osmostress-induced transitory G1 delay. The sequence is that of Cyclin-dependent kinase inhibitor CIP1 from Saccharomyces cerevisiae (strain ATCC 204508 / S288c) (Baker's yeast).